The sequence spans 161 residues: Large ribosomal subunit protein uL15 (161 aa).

A disordered region spans residues 1-50; that stretch reads MKLSDIADNAGSRKKRMRIGRGIGSGKGKTGGRGGKGQTARSGVRINGFE. Residues 21 to 37 show a composition bias toward gly residues; it reads RGIGSGKGKTGGRGGKG.

It belongs to the universal ribosomal protein uL15 family. Part of the 50S ribosomal subunit.

In terms of biological role, binds to the 23S rRNA. This Nitrobacter winogradskyi (strain ATCC 25391 / DSM 10237 / CIP 104748 / NCIMB 11846 / Nb-255) protein is Large ribosomal subunit protein uL15.